The primary structure comprises 235 residues: uncharacterized protein (235 aa).

A helical transmembrane segment spans residues 27–47 (AMKLWSTWITLLILTFFCSEC). The 62-residue stretch at 124–185 (YFWGESKYVP…CCGYDCCSNS (62 aa)) folds into the CX domain. The chain crosses the membrane as a helical span at residues 187–207 (IFTSIFSLLVILLIVSVLSIF).

The protein localises to the membrane. This is an uncharacterized protein from Caenorhabditis elegans.